The chain runs to 475 residues: Glycogen synthase (475 aa).

Lys15 is a binding site for ADP-alpha-D-glucose.

The protein belongs to the glycosyltransferase 1 family. Bacterial/plant glycogen synthase subfamily.

It carries out the reaction [(1-&gt;4)-alpha-D-glucosyl](n) + ADP-alpha-D-glucose = [(1-&gt;4)-alpha-D-glucosyl](n+1) + ADP + H(+). It functions in the pathway glycan biosynthesis; glycogen biosynthesis. Its function is as follows. Synthesizes alpha-1,4-glucan chains using ADP-glucose. In Alkaliphilus metalliredigens (strain QYMF), this protein is Glycogen synthase.